Consider the following 507-residue polypeptide: MVSATPPAPADGRRVALLTLGCARNEVDSEELAARLHSDGWQVTTDGEGADVVVVNTCGFVEKAKQDSIQTLLAAAETGAKVVAAGCMAERYGRELAESLPEAQAVLSFDDYPDISDRLGAVLAGTAIDAHTPRDRRELLPLTPVRRGEAAVSLPGHGTPAAVAQPGARSAPIEVDEHTPAHLRPVLRRRLDTGPVASLKLASGCDRRCAFCAIPAFRGAFVSRPPEALLAEAEWLARTGVRELVLVSENSSSYGKDLGDPRALEKLLPQLAAVDGIVRVRASYLQPAETRPGLVEAIATTPGVAPYFDLSFQHSSEAVLRRMRRFGSTDRFLELLGSIRALSPEAGARSNFIVGFPGETRADVAELVRFLEEARLDAIGVFDYSDEDGTEAAGLSGKVTTATVKRRYDRLSALADELCAQRAEQRLGSTVQVLVDSVDGGVVEGRAAHQAPEVDGSTTLVAPVGGGVDLTALRPGDLVECTVTATEGVDLVAVPDAMISAAPGVAR.

The region spanning 13–124 is the MTTase N-terminal domain; the sequence is RRVALLTLGC…ISDRLGAVLA (112 aa). The [4Fe-4S] cluster site is built by Cys22, Cys58, Cys87, Cys205, Cys209, and Cys212. The region spanning 191–422 is the Radical SAM core domain; that stretch reads LDTGPVASLK…ALADELCAQR (232 aa). Positions 424–497 constitute a TRAM domain; it reads EQRLGSTVQV…GVDLVAVPDA (74 aa).

Belongs to the methylthiotransferase family. RimO subfamily. [4Fe-4S] cluster serves as cofactor.

The protein resides in the cytoplasm. It catalyses the reaction L-aspartate(89)-[ribosomal protein uS12]-hydrogen + (sulfur carrier)-SH + AH2 + 2 S-adenosyl-L-methionine = 3-methylsulfanyl-L-aspartate(89)-[ribosomal protein uS12]-hydrogen + (sulfur carrier)-H + 5'-deoxyadenosine + L-methionine + A + S-adenosyl-L-homocysteine + 2 H(+). In terms of biological role, catalyzes the methylthiolation of an aspartic acid residue of ribosomal protein uS12. The protein is Ribosomal protein uS12 methylthiotransferase RimO of Salinispora tropica (strain ATCC BAA-916 / DSM 44818 / JCM 13857 / NBRC 105044 / CNB-440).